A 277-amino-acid polypeptide reads, in one-letter code: Large ribosomal subunit protein uL2 (277 aa).

Disordered stretches follow at residues 37 to 60 (KNST…GHKH) and 223 to 265 (VVMN…KRTD). Positions 39-49 (STAGRNNNGHI) are enriched in polar residues. A compositionally biased stretch (basic residues) spans 50-60 (TTRHKGGGHKH). Over residues 229-244 (DHPHGGGEGRTGEARE) the composition is skewed to basic and acidic residues.

The protein belongs to the universal ribosomal protein uL2 family. As to quaternary structure, part of the 50S ribosomal subunit. Forms a bridge to the 30S subunit in the 70S ribosome.

In terms of biological role, one of the primary rRNA binding proteins. Required for association of the 30S and 50S subunits to form the 70S ribosome, for tRNA binding and peptide bond formation. It has been suggested to have peptidyltransferase activity; this is somewhat controversial. Makes several contacts with the 16S rRNA in the 70S ribosome. The sequence is that of Large ribosomal subunit protein uL2 from Neisseria meningitidis serogroup A / serotype 4A (strain DSM 15465 / Z2491).